A 344-amino-acid chain; its full sequence is N-acetyl-gamma-glutamyl-phosphate reductase (344 aa).

Residue cysteine 148 is part of the active site.

Belongs to the NAGSA dehydrogenase family. Type 1 subfamily.

It localises to the cytoplasm. The enzyme catalyses N-acetyl-L-glutamate 5-semialdehyde + phosphate + NADP(+) = N-acetyl-L-glutamyl 5-phosphate + NADPH + H(+). Its pathway is amino-acid biosynthesis; L-arginine biosynthesis; N(2)-acetyl-L-ornithine from L-glutamate: step 3/4. Its function is as follows. Catalyzes the NADPH-dependent reduction of N-acetyl-5-glutamyl phosphate to yield N-acetyl-L-glutamate 5-semialdehyde. This chain is N-acetyl-gamma-glutamyl-phosphate reductase, found in Geobacillus kaustophilus (strain HTA426).